A 462-amino-acid polypeptide reads, in one-letter code: MSLKIKSKITIGVLLIIFLLSIIFTLENVSLAQTSPQISVYKVVGSADLSNPGSAGYWSQIPWTNISLTANIPMAPTSGLTHYLLVKAAWNGSWIFILEEWQAPEPAFNAWSTAVAGIYPNASGPGLFRMIELTPGTTYSLERNYTNYVSIINGKEETGRIVFNYSGITLPAPNNTEITVMSNGTILLWHSPRPVEDLLYNDGMFYGYYVNSTWYYPDRAAIMWYLGSGVPTKDDMNIGGKYPGQQFDGITFKDAGGSLAQSGGSANIWMWVSGATWNNSTYDPAFKSNIWQNESLTGLSYVDSGNHGFAVPLYTNNTNMYEVDTAGIWYTPVASEGLNGSLFFIWTGAKYENGSWVVEFARPLSVPLDYQPFMPNITVGKTYYVAFAVWQGRLGETLFDKSITSSFLSLELVTTPPTSTTTSTSPVTTISSAIPPVTLYVTIIGVVVALVALVILYVVFRR.

Over 1–8 (MSLKIKSK) the chain is Cytoplasmic. Residues 9–26 (ITIGVLLIIFLLSIIFTL) traverse the membrane as a helical segment. The Extracellular portion of the chain corresponds to 27 to 431 (ENVSLAQTSP…TSTSPVTTIS (405 aa)). N28, N65, N91, N121, N144, N164, N174, N183, N211, N278, N279, N293, N316, N339, N353, and N376 each carry an N-linked (GlcNAc...) asparagine glycan. Residues 432 to 456 (SAIPPVTLYVTIIGVVVALVALVIL) traverse the membrane as a helical segment. Residues 457-462 (YVVFRR) are Cytoplasmic-facing.

Heme serves as cofactor. In terms of processing, N-glycosylated on at least seven Asn residues by identical hexasaccharide units composed of Man, GlcNAc, Glc and 6-deoxy-6-sulfoglucose residues in the molar ration of 2:2:1:1. Post-translationally, O-glycosylated on probably as many as 35 positions by single Man residues.

Its subcellular location is the cell membrane. Its function is as follows. Monoheme cytochrome whose physiological function is not yet clear. The polypeptide is Cytochrome b558/566 subunit A (cbsA) (Sulfolobus acidocaldarius (strain ATCC 33909 / DSM 639 / JCM 8929 / NBRC 15157 / NCIMB 11770)).